The sequence spans 222 residues: 7-cyano-7-deazaguanine synthase (222 aa).

11 to 21 is a binding site for ATP; the sequence is FSGGQDSTTCL. Residues Cys187, Cys195, Cys198, and Cys201 each coordinate Zn(2+).

It belongs to the QueC family. It depends on Zn(2+) as a cofactor.

It carries out the reaction 7-carboxy-7-deazaguanine + NH4(+) + ATP = 7-cyano-7-deazaguanine + ADP + phosphate + H2O + H(+). It participates in purine metabolism; 7-cyano-7-deazaguanine biosynthesis. Functionally, catalyzes the ATP-dependent conversion of 7-carboxy-7-deazaguanine (CDG) to 7-cyano-7-deazaguanine (preQ(0)). The protein is 7-cyano-7-deazaguanine synthase of Actinobacillus pleuropneumoniae serotype 7 (strain AP76).